Reading from the N-terminus, the 340-residue chain is MLILGIETSCDDTGAAIYDLEKGLIIHKVISQNNIHSKYGGVVPEKSSKYHLKNIQPLVENIFKNSNISLSKIDGIAYTAGPGLVGSLIIGATFACSLAYTLQIPSIAINHLEGHLLTPMIKYKRPKFPFLGLIISGAHTQFVLAEDIGKYKIIGDCLDDALGEAFDKVAKLLGIKYPGGKKLSIIAKQGNSKRFFFPRPMTKKPGINFSFSGLKTYAKNLVSSFSKIDNQTKCDIARAFEDSIIDTVIIKCKRALDITNSKILLISGGVSANEPLRKNLRNLMKSRNGKLFFSKKSLCTDNAAMIAYVGSIRFKKNKTKDLSVLINPKWSLEDISRLEN.

Positions 111 and 115 each coordinate Fe cation. Residues 134 to 138 (IISGA), Asp-167, Gly-180, and Asn-273 contribute to the substrate site. A Fe cation-binding site is contributed by Asp-301.

The protein belongs to the KAE1 / TsaD family. It depends on Fe(2+) as a cofactor.

The protein resides in the cytoplasm. The catalysed reaction is L-threonylcarbamoyladenylate + adenosine(37) in tRNA = N(6)-L-threonylcarbamoyladenosine(37) in tRNA + AMP + H(+). Required for the formation of a threonylcarbamoyl group on adenosine at position 37 (t(6)A37) in tRNAs that read codons beginning with adenine. Is involved in the transfer of the threonylcarbamoyl moiety of threonylcarbamoyl-AMP (TC-AMP) to the N6 group of A37, together with TsaE and TsaB. TsaD likely plays a direct catalytic role in this reaction. The chain is tRNA N6-adenosine threonylcarbamoyltransferase from Wigglesworthia glossinidia brevipalpis.